Consider the following 278-residue polypeptide: E3 ubiquitin-protein ligase CHIP (278 aa).

TPR repeat units lie at residues 10-43 (AERL…SPNV), 45-77 (AYWT…VHNS), and 78-111 (VKAH…GRCS). The stretch at 143–194 (ELNSLKETCEAALNQQRALDMSRTEESSDEAYTAHTERLKALERVFKKAAEE) forms a coiled coil. The U-box domain maps to 199–273 (EVPDYLCCNI…AAYLEKHVWA (75 aa)).

Interacts with HSC70-4, PP2AA1, PP2AA3 and PP2A5, as well as with UBC8, UBC9 and UBC10. Also interacts with the chloroplastic proteolytic subunits ClpP4, FtsH1 and FtsH2.

It carries out the reaction S-ubiquitinyl-[E2 ubiquitin-conjugating enzyme]-L-cysteine + [acceptor protein]-L-lysine = [E2 ubiquitin-conjugating enzyme]-L-cysteine + N(6)-ubiquitinyl-[acceptor protein]-L-lysine.. It functions in the pathway protein modification; protein ubiquitination. In terms of biological role, has E3 ubiquitin-protein ligase activity and may target misfolded substrates towards proteasomal degradation. Regulates the activity of some serine/threonine-protein phosphatases by E3 ubiquitin-protein ligase activity. Required for responses to biotic and abiotic stresses such as auxin, abscisic acid (ABA), low and high temperature and darkness, probably through the activation of serine/threonine-protein phosphatase and the subsequent modification of the plasma membrane composition. Regulates the chloroplastic Clp proteolytic activity in response to stresses. Ubiquitylates FtsH1, a component of the chloroplast FtsH protease, and affects protein degradation in chloroplasts. Mediates plastid precursor degradation to prevent cytosolic precursor accumulation, together with the molecular chaperone HSC70-4. Mediates ubiquitination of transit peptides and thereby led to their degradation through the ubiquitin-proteasome system. This is E3 ubiquitin-protein ligase CHIP from Arabidopsis thaliana (Mouse-ear cress).